Reading from the N-terminus, the 449-residue chain is Telomere resolvase ResT (449 aa).

Requires No cofactors were found to be necessary. as cofactor.

The protein resides in the cytoplasm. Its subcellular location is the nucleoid. Catalyzes the conservative, sequence-specific DNA breakage and reunion reaction that generates two hairpin telomeres from a replicated telomere substrate. Breaks two phosphodiester bonds in a single DNA duplex and joins each end with the opposite DNA strand to form covalently closed hairpin telomeres. In vitro relaxed-circular, open-circular and linearized plasmids, but not supercoiled DNA, are all substrates. Cleavage is position-dependent relative to conserved sequence elements. The chain is Telomere resolvase ResT from Borreliella burgdorferi (strain ATCC 35210 / DSM 4680 / CIP 102532 / B31) (Borrelia burgdorferi).